Here is a 1196-residue protein sequence, read N- to C-terminus: MAGHDVKYGKHRTRRSFSRIKEVIGLPNLIEVQTLSYKNFLDEGLANVFKEMFPIDNFAGTMELEFVGYEMKTPKYTVEEARAHDANYSAPIYVTFRLVNKETGELKTQEVFFGDFPLMTEMGTFINNGSERLIVSQLVRSPGSYFHLKADKNGLESFGHTTIPNRGAWFELDTDAKGIGYVRIDRTRKLTFTTMLRALGFGSDEEILELLGETQLLTDTIAKDVHKNPADTRVEEALKDIYDRLRPGEPKTADSSRGLLVARFFDPKRYDFAPVGRYKFNKKLALKNRLLGLTLAEPIVDPETGEILVNTDTLVTRDVLDLIEPLLDNGLGNFVVEPSDDAVIPEPITLQSIKVYSPKDPERVVTLLSNGNPDAECRVLTPADVISNISYWLGLAEGIGKVDDIDHLGNRRIRSVGELLQNQVRIGLSRMERVIRERMSSSENENITPQGLINIRPVTASIKEFFGSSQLSQFMDQHNPLSELSHKRRFSALGPGGISRDRASYEVRDVHYTHYGRMCPIETPEGPNIGLINNLSSYAKVNEYGFIMSPYRRVDRVNGVVTDEVEYLTADEEDNYTVAQANSPLTEDSRFANETVMARHTGNNIEVEASTADYMDVSPKQVIAVAAACIPFLENDDSNRALMGANMQRQAVPLIDPHAPWIGTGMEHQTARDSGAALIAKHAGVVEYVDGNEIRVRRTSGELDIYNITKYRRSNSGTSYNQRPLARLGEKVEKGDIIADGPSMENGEMALGQNPLVAYMTWEGYNFEDAVIMSERLIKDDVYTSIAIEEYESETRDTKLGPEEITREIPNVGDEALKNLDESGIIRIGAEVKDGDLLVGKVTPKGETDPTPEERLLRAIFGEKAREVRDTSLRVPHGGGGIVHDVRVFTRENGDELPSGVNKLVRVFIAQKRKIHVGDKMAGRHGNKGVVSNIVPMEDMPYLPDGTPIDIMLNPLGVPSRMNIGQVMELHLGMAARTLGIHIATPVFDGASDEDIWDTVKEAGMADDAKTVLYDGRTGEPFDNRISVGVMYMIKLHHMVDDKLHARSVGPYSLVTQQPLGGKAQFGGQRFGEMEVWALEAYGAANVLQEILTYKSDDVIGRTRAYEAIVKGERIPKPGLPESFRVLVKELQSLGLDMKVLDADRNVLDLRELDEDEVMTRPDNTEITPEMLEAQEAIVAQAEAEEEALINADTEK.

The protein belongs to the RNA polymerase beta chain family. The RNAP catalytic core consists of 2 alpha, 1 beta, 1 beta' and 1 omega subunit. When a sigma factor is associated with the core the holoenzyme is formed, which can initiate transcription.

The catalysed reaction is RNA(n) + a ribonucleoside 5'-triphosphate = RNA(n+1) + diphosphate. DNA-dependent RNA polymerase catalyzes the transcription of DNA into RNA using the four ribonucleoside triphosphates as substrates. The chain is DNA-directed RNA polymerase subunit beta from Lactococcus lactis subsp. lactis (strain IL1403) (Streptococcus lactis).